Consider the following 594-residue polypeptide: UvrABC system protein C (594 aa).

The region spanning 14–91 (DQPGCYLMKD…IKKHDPKYNI (78 aa)) is the GIY-YIG domain. The 36-residue stretch at 196-231 (KEVRSELETKMYEASEKLEFERAKELRDQIAHIDAI) folds into the UVR domain.

Belongs to the UvrC family. In terms of assembly, interacts with UvrB in an incision complex.

The protein localises to the cytoplasm. The UvrABC repair system catalyzes the recognition and processing of DNA lesions. UvrC both incises the 5' and 3' sides of the lesion. The N-terminal half is responsible for the 3' incision and the C-terminal half is responsible for the 5' incision. This chain is UvrABC system protein C, found in Bacillus anthracis (strain A0248).